A 514-amino-acid chain; its full sequence is Citrate synthase 2, peroxisomal (514 aa).

Residues histidine 324, histidine 363, and aspartate 419 contribute to the active site.

This sequence belongs to the citrate synthase family. Widely expressed. Expressed throughout the shoot. Expressed in flower, silique, stem, cauline leaf, young leaf, mature leaf and senescent leaf.

The protein localises to the peroxisome. It carries out the reaction oxaloacetate + acetyl-CoA + H2O = citrate + CoA + H(+). Its pathway is carbohydrate metabolism; tricarboxylic acid cycle; isocitrate from oxaloacetate: step 1/2. In terms of biological role, peroxisomal citrate synthase required for the fatty acid respiration in seedlings, citrate being exported from peroxisomes into mitochondria during respiration of triacylglycerol (TAG). Indeed, complete respiration requires the transfer of carbon in the form of citrate from the peroxisome to the mitochondria. In Arabidopsis thaliana (Mouse-ear cress), this protein is Citrate synthase 2, peroxisomal (CSY2).